Reading from the N-terminus, the 56-residue chain is Alpha-conotoxin EpI (56 aa).

An N-terminal signal peptide occupies residues Met1 to Ser16. A propeptide spanning residues Phe17–Lys39 is cleaved from the precursor. 2 disulfide bridges follow: Cys41/Cys47 and Cys42/Cys55. A ser-Xaa-Pro motif, crucial for potent interaction with nAChR region spans residues Ser43–Pro45. The residue at position 54 (Tyr54) is a Sulfotyrosine. The residue at position 55 (Cys55) is a Cysteine amide.

This sequence belongs to the conotoxin A superfamily. Post-translationally, both tyrosine sulfation and C-terminal amidation are important for activity and structure stability. Expressed by the venom duct.

It localises to the secreted. Its function is as follows. Alpha-conotoxins act on postsynaptic membranes, they bind to the nicotinic acetylcholine receptors (nAChR) and thus inhibit them. This native peptide blocks mammalian nicotinic acetylcholine receptors composed of alpha-3-beta-2/CHRNA3-CHRNB2 and alpha-3-beta-4/CHRNA3-CHRNB4 subunits. This chain is Alpha-conotoxin EpI, found in Conus episcopatus (Bishop's cone).